The sequence spans 100 residues: Cysteine-rich venom protein VAR1 (100 aa).

The signal sequence occupies residues 1-22 (MILLKLYLTLAAILCQSRGTTS). The SCP domain occupies 41 to 81 (NKHNDLRRTVDPPAKNMLKMSWDNIIAESAKRAALRCNQNE).

The protein belongs to the CRISP family. Post-translationally, contains 8 disulfide bonds. As to expression, expressed by the venom gland.

The protein localises to the secreted. In terms of biological role, blocks ryanodine receptors, and potassium channels. The sequence is that of Cysteine-rich venom protein VAR1 from Varanus acanthurus (Ridge-tailed monitor).